Here is a 267-residue protein sequence, read N- to C-terminus: Thiamine thiazole synthase (267 aa).

Residues S41, E60–R61, G68, V132, and H160–D162 each bind NAD(+). Fe cation-binding residues include D162 and H177. Position 227 (M227) interacts with NAD(+). R237 lines the glycine pocket.

Belongs to the THI4 family. Homooctamer; tetramer of dimers. Fe(2+) serves as cofactor.

The enzyme catalyses hydrogen sulfide + glycine + NAD(+) = ADP-5-ethyl-4-methylthiazole-2-carboxylate + nicotinamide + 3 H2O + H(+). The protein operates within cofactor biosynthesis; thiamine diphosphate biosynthesis. Its function is as follows. Involved in the biosynthesis of the thiazole moiety of thiamine. Catalyzes the conversion of NAD and glycine to adenosine diphosphate 5-(2-hydroxyethyl)-4-methylthiazole-2-carboxylate (ADT), an adenylated thiazole intermediate, using free sulfide as a source of sulfur. This is Thiamine thiazole synthase from Saccharolobus islandicus (strain M.14.25 / Kamchatka #1) (Sulfolobus islandicus).